Consider the following 519-residue polypeptide: 2,3-bisphosphoglycerate-independent phosphoglycerate mutase (519 aa).

Positions 18 and 68 each coordinate Mn(2+). Serine 68 functions as the Phosphoserine intermediate in the catalytic mechanism. Residues histidine 129, 159–160 (RD), arginine 191, arginine 197, 267–270 (RADR), and lysine 341 each bind substrate. 5 residues coordinate Mn(2+): aspartate 408, histidine 412, aspartate 449, histidine 450, and histidine 468.

It belongs to the BPG-independent phosphoglycerate mutase family. In terms of assembly, monomer. Requires Mn(2+) as cofactor.

The catalysed reaction is (2R)-2-phosphoglycerate = (2R)-3-phosphoglycerate. The protein operates within carbohydrate degradation; glycolysis; pyruvate from D-glyceraldehyde 3-phosphate: step 3/5. In terms of biological role, catalyzes the interconversion of 2-phosphoglycerate and 3-phosphoglycerate. This Coxiella burnetii (strain Dugway 5J108-111) protein is 2,3-bisphosphoglycerate-independent phosphoglycerate mutase.